A 272-amino-acid polypeptide reads, in one-letter code: Ribosomal RNA small subunit methyltransferase A (272 aa).

The S-adenosyl-L-methionine site is built by Asn18, Leu20, Gly45, Glu66, Asp91, and Asn113.

This sequence belongs to the class I-like SAM-binding methyltransferase superfamily. rRNA adenine N(6)-methyltransferase family. RsmA subfamily.

The protein localises to the cytoplasm. It catalyses the reaction adenosine(1518)/adenosine(1519) in 16S rRNA + 4 S-adenosyl-L-methionine = N(6)-dimethyladenosine(1518)/N(6)-dimethyladenosine(1519) in 16S rRNA + 4 S-adenosyl-L-homocysteine + 4 H(+). Specifically dimethylates two adjacent adenosines (A1518 and A1519) in the loop of a conserved hairpin near the 3'-end of 16S rRNA in the 30S particle. May play a critical role in biogenesis of 30S subunits. The sequence is that of Ribosomal RNA small subunit methyltransferase A from Yersinia enterocolitica serotype O:8 / biotype 1B (strain NCTC 13174 / 8081).